A 77-amino-acid polypeptide reads, in one-letter code: U10-lycotoxin-Ls1d (77 aa).

Residues 1–20 form the signal peptide; it reads MKLIIFTGLFLFAIVSLIEA. The propeptide occupies 21–26; it reads EEESGR.

This sequence belongs to the neurotoxin 19 (CSTX) family. 09 (U10-Lctx) subfamily. Contains 4 disulfide bonds. As to expression, expressed by the venom gland.

It localises to the secreted. The chain is U10-lycotoxin-Ls1d from Lycosa singoriensis (Wolf spider).